The sequence spans 708 residues: Probable GTP diphosphokinase RSH3, chloroplastic (708 aa).

Disordered regions lie at residues 1 to 50 (MSLP…AAGG) and 109 to 134 (HSPVSVFQGPSSSPAASRSPPASWLA). The N-terminal 58 residues, 1-58 (MSLPAISLYTSPPPGAVYSSEFDPSSRGSSPPCSTAPPSTSHRPPAAAGGLSCLFSSP), are a transit peptide targeting the chloroplast. 2 stretches are compositionally biased toward low complexity: residues 29 to 41 (SSPPCSTAPPSTS) and 118 to 131 (PSSSPAASRSPPAS). The HD domain occupies 233–337 (YLQHCVETAV…IKLADRVHNM (105 aa)).

Belongs to the RelA/SpoT family.

It is found in the plastid. The protein localises to the chloroplast. The catalysed reaction is GTP + ATP = guanosine 3'-diphosphate 5'-triphosphate + AMP. Its function is as follows. Probable ppGpp (guanosine 3'-diphosphate 5'-diphosphate) synthetase that may be involved in a rapid plant ppGpp-mediated response to pathogens and other stresses. The protein is Probable GTP diphosphokinase RSH3, chloroplastic (RSH3) of Oryza sativa subsp. japonica (Rice).